The chain runs to 251 residues: Haloacid dehalogenase-like hydrolase domain-containing protein 3 (251 aa).

Lys15 carries the N6-acetyllysine; alternate modification. The residue at position 15 (Lys15) is an N6-succinyllysine; alternate.

It belongs to the HAD-like hydrolase superfamily.

This is Haloacid dehalogenase-like hydrolase domain-containing protein 3 (HDHD3) from Homo sapiens (Human).